The following is a 544-amino-acid chain: NXPE family member 4 (544 aa).

The signal sequence occupies residues 1–27 (MKISMINYKSLLALLFILASWIIFTVF). N-linked (GlcNAc...) asparagine glycans are attached at residues N29, N38, N47, N48, N92, N160, and N210.

This sequence belongs to the NXPE family.

It is found in the secreted. This chain is NXPE family member 4 (NXPE4), found in Homo sapiens (Human).